The chain runs to 444 residues: Trigger factor (444 aa).

The 86-residue stretch at 160-245 (DMQVTFDFEG…VKQVEKPKLP (86 aa)) folds into the PPIase FKBP-type domain.

This sequence belongs to the FKBP-type PPIase family. Tig subfamily.

The protein localises to the cytoplasm. The catalysed reaction is [protein]-peptidylproline (omega=180) = [protein]-peptidylproline (omega=0). In terms of biological role, involved in protein export. Acts as a chaperone by maintaining the newly synthesized protein in an open conformation. Functions as a peptidyl-prolyl cis-trans isomerase. In Acinetobacter baylyi (strain ATCC 33305 / BD413 / ADP1), this protein is Trigger factor.